The sequence spans 155 residues: Deoxyuridine 5'-triphosphate nucleotidohydrolase (155 aa).

Substrate is bound by residues Arg74–Gly76, Asn87, and Leu91–Asp93.

Belongs to the dUTPase family. Mg(2+) serves as cofactor.

It carries out the reaction dUTP + H2O = dUMP + diphosphate + H(+). It functions in the pathway pyrimidine metabolism; dUMP biosynthesis; dUMP from dCTP (dUTP route): step 2/2. Functionally, this enzyme is involved in nucleotide metabolism: it produces dUMP, the immediate precursor of thymidine nucleotides and it decreases the intracellular concentration of dUTP so that uracil cannot be incorporated into DNA. The polypeptide is Deoxyuridine 5'-triphosphate nucleotidohydrolase (Xanthomonas axonopodis pv. citri (strain 306)).